The primary structure comprises 141 residues: Fluoride-specific ion channel FluC 1 (141 aa).

4 helical membrane passes run 12–32, 44–64, 79–99, and 107–127; these read LYAL…LVGV, WATL…AAIA, FVMT…LETF, and ALAA…AVWL. 2 residues coordinate Na(+): Gly-86 and Thr-89.

Belongs to the fluoride channel Fluc/FEX (TC 1.A.43) family.

The protein localises to the cell inner membrane. It catalyses the reaction fluoride(in) = fluoride(out). Na(+) is not transported, but it plays an essential structural role and its presence is essential for fluoride channel function. Functionally, fluoride-specific ion channel. Important for reducing fluoride concentration in the cell, thus reducing its toxicity. This is Fluoride-specific ion channel FluC 1 from Rhodopseudomonas palustris (strain BisB18).